Reading from the N-terminus, the 502-residue chain is UDP-N-acetylmuramate--L-alanine ligase (502 aa).

119–125 (GSHGKST) serves as a coordination point for ATP.

This sequence belongs to the MurCDEF family.

It is found in the cytoplasm. The enzyme catalyses UDP-N-acetyl-alpha-D-muramate + L-alanine + ATP = UDP-N-acetyl-alpha-D-muramoyl-L-alanine + ADP + phosphate + H(+). It participates in cell wall biogenesis; peptidoglycan biosynthesis. Its function is as follows. Cell wall formation. The polypeptide is UDP-N-acetylmuramate--L-alanine ligase (Frankia casuarinae (strain DSM 45818 / CECT 9043 / HFP020203 / CcI3)).